The primary structure comprises 123 residues: Small ribosomal subunit protein uS13 (123 aa).

The protein belongs to the universal ribosomal protein uS13 family. In terms of assembly, part of the 30S ribosomal subunit. Forms a loose heterodimer with protein S19. Forms two bridges to the 50S subunit in the 70S ribosome.

Located at the top of the head of the 30S subunit, it contacts several helices of the 16S rRNA. In the 70S ribosome it contacts the 23S rRNA (bridge B1a) and protein L5 of the 50S subunit (bridge B1b), connecting the 2 subunits; these bridges are implicated in subunit movement. Contacts the tRNAs in the A and P-sites. In Neorickettsia sennetsu (strain ATCC VR-367 / Miyayama) (Ehrlichia sennetsu), this protein is Small ribosomal subunit protein uS13.